The following is a 430-amino-acid chain: Na(+)/H(+) antiporter NhaA 2 (430 aa).

Helical transmembrane passes span Phe-11–Ile-31, Leu-60–Leu-80, Val-97–Ala-117, Gly-127–Gly-147, Leu-181–Trp-201, Val-215–Leu-235, His-288–Gly-308, Val-309–Leu-329, Trp-356–Val-376, and Gly-393–Ile-413.

It belongs to the NhaA Na(+)/H(+) (TC 2.A.33) antiporter family.

It is found in the cell membrane. The catalysed reaction is Na(+)(in) + 2 H(+)(out) = Na(+)(out) + 2 H(+)(in). In terms of biological role, na(+)/H(+) antiporter that extrudes sodium in exchange for external protons. The sequence is that of Na(+)/H(+) antiporter NhaA 2 from Deinococcus geothermalis (strain DSM 11300 / CIP 105573 / AG-3a).